Reading from the N-terminus, the 511-residue chain is Glycoprotein (511 aa).

The first 16 residues, 1-16, serve as a signal peptide directing secretion; that stretch reads MKCLLCLAFLFIGVNC. Residues 17–467 are Virion surface-facing; the sequence is KFTIVFPHNQ…FSGWKSSIAS (451 aa). The segment at 18–35 is trimerization; that stretch reads FTIVFPHNQKGNWKNVPS. 6 cysteine pairs are disulfide-bonded: C40–C300, C75–C108, C84–C130, C169–C174, C193–C240, and C235–C269. The segment at 53–172 is fusion peptide; the sequence is IGTALQVKMP…QFINGKCSND (120 aa). N179 carries N-linked (GlcNAc...) asparagine; by host glycosylation. Residues 259–309 are trimerization; the sequence is DLFAAAKFPECPEGSSISAPSQTSVDVSLIQDVERILDYSLCQETWSKIRA. A glycan (N-linked (GlcNAc...) asparagine; by host) is linked at N336. The segment at 383-405 is trimerization; that stretch reads EIGPNGVLRTSSGYKFPLYMIGH. The helical transmembrane segment at 468 to 488 threads the bilayer; the sequence is FFFIIGLIIGLFLVLRVGIYL. Residue C489 is the site of S-palmitoyl cysteine; by host attachment. Topologically, residues 489 to 511 are intravirion; sequence CIKLKHTRKRKIYADIEMNRLGK. The basolateral targeting ex vivo motif lies at 496–506; sequence RKRKIYADIEM.

The protein belongs to the vesiculovirus glycoprotein family. In terms of assembly, homotrimer. Interacts with host LDL at target cell surface. Post-translationally, glycosylated by host. Palmitoylated by host.

Its subcellular location is the virion membrane. It localises to the host membrane. Functionally, attaches the virus to host LDL receptors, inducing clathrin-dependent endocytosis of the virion. In the endosome, the acidic pH induces conformational changes in the glycoprotein trimer, which trigger fusion between virus and endosomal membrane. This Aedes (Bovine) protein is Glycoprotein (G).